A 217-amino-acid chain; its full sequence is Ras-related protein RABA1g (217 aa).

A GTP-binding site is contributed by 20–27 (GDSGVGKS). The Effector region motif lies at 42 to 50 (SKSTIGVEF). Residues 68 to 72 (DTAGQ), 126 to 129 (NKAD), and 156 to 157 (SA) contribute to the GTP site. Residues Cys-214 and Cys-215 are each lipidated (S-geranylgeranyl cysteine).

This sequence belongs to the small GTPase superfamily. Rab family.

Its subcellular location is the cell membrane. Functionally, intracellular vesicle trafficking and protein transport. This is Ras-related protein RABA1g (RABA1G) from Arabidopsis thaliana (Mouse-ear cress).